The chain runs to 177 residues: UPF0114 protein HP_0189 (177 aa).

A run of 3 helical transmembrane segments spans residues 15-35, 54-74, and 145-165; these read WLLA…GYVF, LVLS…VLMV, and PIFW…LAAV.

It belongs to the UPF0114 family.

The protein resides in the cell membrane. The protein is UPF0114 protein HP_0189 of Helicobacter pylori (strain ATCC 700392 / 26695) (Campylobacter pylori).